A 483-amino-acid polypeptide reads, in one-letter code: UDP-glucosyl transferase 73B2 (483 aa).

His22 serves as the catalytic Proton acceptor. Residue His22 coordinates an anthocyanidin. Residue Asp133 is the Charge relay of the active site. Residues Ala355, Gln357, His372, Trp375, Asn376, Ser377, and Glu380 each coordinate UDP-alpha-D-glucose. Ala395 provides a ligand contact to an anthocyanidin. Positions 396 and 397 each coordinate UDP-alpha-D-glucose.

Belongs to the UDP-glycosyltransferase family. As to expression, expressed in roots and flowers.

It carries out the reaction a 7-O-hydroxy-flavonol + UDP-alpha-D-glucose = a flavonol 7-O-beta-D-glucoside + UDP + H(+). It functions in the pathway secondary metabolite biosynthesis; flavonoid biosynthesis. Catalyzes the glycosylation of flavonoids from UDP-glucose. Uses a wide range of flavonoid substrates including flavonols (quercetin, kaempferol, isorhamnetin, 3-OH 7,2',4'-MeO-flavone), flavones (luteolin, apigenin), flavanones (naringenin, hesperetin), flavanonols (taxifolin), isoflavones (genistein, daidzein), flavonol glycosides (quercitrin, isoquercitrin, rutin), and chalcones (isoliquiritigenin). Specific for the C-7 position, with a 20-fold lower activity for the C-3 position. This chain is UDP-glucosyl transferase 73B2 (UGT73B2), found in Arabidopsis thaliana (Mouse-ear cress).